Consider the following 212-residue polypeptide: Glutathione S-transferase (212 aa).

In terms of domain architecture, GST N-terminal spans 1 to 82; the sequence is MGMKLHGPAM…YIAHTYADKG (82 aa). Glutathione-binding positions include serine 11, 12–13, 40–41, 53–54, and 66–67; these read PA, HK, QV, and ES. The region spanning 89 to 212 is the GST C-terminal domain; that stretch reads DPKKMAIMSV…AWSKAIEYKQ (124 aa).

This sequence belongs to the GST superfamily. Phi family.

It carries out the reaction RX + glutathione = an S-substituted glutathione + a halide anion + H(+). Functionally, conjugation of reduced glutathione to a wide number of exogenous and endogenous hydrophobic electrophiles. This chain is Glutathione S-transferase, found in Hyoscyamus muticus (Egyptian henbane).